The primary structure comprises 424 residues: MTVIKKGKNKKKNLKNDDRYKELDSLITNGSEIGDNSGRSCIKRFFKIIGNEMKNNVYVYFLSILYLCVCVMNKVFAKRTLNKMGNYSFVTSETHNIICIVVFQLLYFIYRKTSTSGYKNESQKNFGWQFFLISLLDASTVIISMIGLTRTTGNIQSFIMQLIIPVNMYFCFMFLGYRYHLFNYLGAFIILITIAVVETFLSFETQSENSIIFNLIMISALIPLSFSNMTREVVFKKHKINILRLNAMVVLFQFFTSLLVLPVYNIPFLKEIYMPFSEMSTNINNGLRCLFYGQNTVVENCGVGMVKMCDNCEGAWKTFITFSFFNICDNLLACYIIDKFSTMTYTIVSCIQGPAITIAYYFKFLAGDAVRKPRILDFLTLFGYLFGTIIYRIGNIILEKKKMVKSQNSNDSEAELTCIETSTA.

Over 1-56 (MTVIKKGKNKKKNLKNDDRYKELDSLITNGSEIGDNSGRSCIKRFFKIIGNEMKNN) the chain is Cytoplasmic. Residues 57-77 (VYVYFLSILYLCVCVMNKVFA) traverse the membrane as a helical segment. Residues 78 to 88 (KRTLNKMGNYS) lie on the Vacuolar side of the membrane. Asn86 carries an N-linked (GlcNAc...) asparagine glycan. Residues 89–109 (FVTSETHNIICIVVFQLLYFI) traverse the membrane as a helical segment. At 110-125 (YRKTSTSGYKNESQKN) the chain is on the cytoplasmic side. The helical transmembrane segment at 126 to 146 (FGWQFFLISLLDASTVIISMI) threads the bilayer. Residues 147 to 156 (GLTRTTGNIQ) lie on the Vacuolar side of the membrane. Residues 157-177 (SFIMQLIIPVNMYFCFMFLGY) form a helical membrane-spanning segment. The Cytoplasmic segment spans residues 178-180 (RYH). The chain crosses the membrane as a helical span at residues 181 to 201 (LFNYLGAFIILITIAVVETFL). Residues 202–209 (SFETQSEN) are Vacuolar-facing. Residues 210–230 (SIIFNLIMISALIPLSFSNMT) traverse the membrane as a helical segment. The Cytoplasmic segment spans residues 231–248 (REVVFKKHKINILRLNAM). A helical membrane pass occupies residues 249-269 (VVLFQFFTSLLVLPVYNIPFL). The Vacuolar portion of the chain corresponds to 270–317 (KEIYMPFSEMSTNINNGLRCLFYGQNTVVENCGVGMVKMCDNCEGAWK). 2 disulfides stabilise this stretch: Cys289–Cys312 and Cys301–Cys309. A helical transmembrane segment spans residues 318–338 (TFITFSFFNICDNLLACYIID). Residues 339-346 (KFSTMTYT) lie on the Cytoplasmic side of the membrane. The helical transmembrane segment at 347-367 (IVSCIQGPAITIAYYFKFLAG) threads the bilayer. The Vacuolar portion of the chain corresponds to 368 to 377 (DAVRKPRILD). Residues 378-398 (FLTLFGYLFGTIIYRIGNIIL) form a helical membrane-spanning segment. At 399 to 424 (EKKKMVKSQNSNDSEAELTCIETSTA) the chain is on the cytoplasmic side.

This sequence belongs to the CRT-like transporter family.

Its subcellular location is the vacuole membrane. Functionally, nutrient transporter. Involved in maintaining the osmotic homeostasis of the digestive vacuole. The protein is Putative chloroquine resistance transporter of Plasmodium yoelii yoelii.